The primary structure comprises 110 residues: Ig kappa chain V region 2717 (110 aa).

Positions 1–23 are framework-1; it reads VEVLTQTPSPVSAAVGGTVTISC. A complementarity-determining-1 region spans residues 24–36; that stretch reads QSTKSIYBBBYLA. The framework-2 stretch occupies residues 37 to 51; the sequence is WYQZKPGQPPKALIY. A complementarity-determining-2 region spans residues 52–58; sequence TASSLAS. The tract at residues 59-90 is framework-3; it reads GVPSRFTGSGSGTZFTLTLSDVZCDDAATYYC. The complementarity-determining-3 stretch occupies residues 91–99; sequence GGADYTGYS. Residues 100-109 are framework-4; that stretch reads FGGGTEVVVK.

The sequence is that of Ig kappa chain V region 2717 from Oryctolagus cuniculus (Rabbit).